A 157-amino-acid chain; its full sequence is Small ribosomal subunit protein uS7 (157 aa).

Belongs to the universal ribosomal protein uS7 family. In terms of assembly, part of the 30S ribosomal subunit. Contacts proteins S9 and S11.

In terms of biological role, one of the primary rRNA binding proteins, it binds directly to 16S rRNA where it nucleates assembly of the head domain of the 30S subunit. Is located at the subunit interface close to the decoding center, probably blocks exit of the E-site tRNA. This is Small ribosomal subunit protein uS7 from Psychrobacter sp. (strain PRwf-1).